A 620-amino-acid polypeptide reads, in one-letter code: 1-deoxy-D-xylulose-5-phosphate synthase (620 aa).

Residues H80 and 121–123 (GHS) contribute to the thiamine diphosphate site. Position 152 (D152) interacts with Mg(2+). Thiamine diphosphate is bound by residues 153–154 (GA), N181, Y288, and E370. N181 is a binding site for Mg(2+).

It belongs to the transketolase family. DXPS subfamily. Homodimer. Requires Mg(2+) as cofactor. Thiamine diphosphate is required as a cofactor.

It catalyses the reaction D-glyceraldehyde 3-phosphate + pyruvate + H(+) = 1-deoxy-D-xylulose 5-phosphate + CO2. It functions in the pathway metabolic intermediate biosynthesis; 1-deoxy-D-xylulose 5-phosphate biosynthesis; 1-deoxy-D-xylulose 5-phosphate from D-glyceraldehyde 3-phosphate and pyruvate: step 1/1. In terms of biological role, catalyzes the acyloin condensation reaction between C atoms 2 and 3 of pyruvate and glyceraldehyde 3-phosphate to yield 1-deoxy-D-xylulose-5-phosphate (DXP). The protein is 1-deoxy-D-xylulose-5-phosphate synthase of Salmonella typhi.